Consider the following 270-residue polypeptide: 2-epi-5-epi-valiolone 7-phosphate 2-epimerase (270 aa).

Catalysis depends on proton donor/acceptor residues glutamate 143 and glutamate 236.

It belongs to the hyi family.

The catalysed reaction is 2-epi-5-epi-valiolone 7-phosphate = 5-epi-valiolone 7-phosphate. Its function is as follows. Involved in the biosynthesis of the alpha-glucosidase inhibitor acarbose. Catalyzes the 2-epimerisation of 2-epi-5-epivaliolone 7-phosphate to yield 5-epi-valiolone 7-phosphate. The sequence is that of 2-epi-5-epi-valiolone 7-phosphate 2-epimerase (acbO) from Actinoplanes sp. (strain ATCC 31044 / CBS 674.73 / SE50/110).